The primary structure comprises 306 residues: Palmitoyl-protein thioesterase ABHD10, mitochondrial (306 aa).

A mitochondrion-targeting transit peptide spans 1–52; sequence MAVARLAAVAAWVPCRSWGWAAVPFGPHRGLSVLLARIPQRAPRWLPACRQK. One can recognise an AB hydrolase-1 domain in the interval 78-178; that stretch reads IIFIPGYLSY…VVALIGVATA (101 aa). Residues S152, D249, and H279 each act as charge relay system in the active site.

Belongs to the AB hydrolase superfamily.

Its subcellular location is the mitochondrion. It catalyses the reaction S-hexadecanoyl-L-cysteinyl-[protein] + H2O = L-cysteinyl-[protein] + hexadecanoate + H(+). The enzyme catalyses mycophenolic acid O-acyl-beta-D-glucuronide + H2O = mycophenolate + D-glucuronate + H(+). With respect to regulation, inhibited by palmostatin-B. Acts as an acyl-protein thioesterase that hydrolyzes fatty acids from acylated residues in proteins. Regulates the mitochondrial S-depalmitoylation of the nucleophilic active site residue of peroxiredoxin-5/PRDX5, a key antioxidant protein, therefore modulating mitochondrial antioxidant ability. Also catalyzes the deglucuronidation of mycophenolic acid acyl-glucuronide, an active metabolite of the immunosuppressant drug mycophenolate. This Homo sapiens (Human) protein is Palmitoyl-protein thioesterase ABHD10, mitochondrial.